Here is a 287-residue protein sequence, read N- to C-terminus: Shikimate dehydrogenase (NADP(+)) (287 aa).

Shikimate is bound by residues 18–20 and Thr-66; that span reads SYS. Residue Lys-70 is the Proton acceptor of the active site. Glu-82 contacts NADP(+). Residues Asn-91 and Asp-106 each contribute to the shikimate site. NADP(+) contacts are provided by residues 130-134 and Met-228; that span reads GSGGA. Position 230 (Tyr-230) interacts with shikimate. Gly-251 serves as a coordination point for NADP(+).

The protein belongs to the shikimate dehydrogenase family. As to quaternary structure, homodimer.

The catalysed reaction is shikimate + NADP(+) = 3-dehydroshikimate + NADPH + H(+). It participates in metabolic intermediate biosynthesis; chorismate biosynthesis; chorismate from D-erythrose 4-phosphate and phosphoenolpyruvate: step 4/7. Functionally, involved in the biosynthesis of the chorismate, which leads to the biosynthesis of aromatic amino acids. Catalyzes the reversible NADPH linked reduction of 3-dehydroshikimate (DHSA) to yield shikimate (SA). The sequence is that of Shikimate dehydrogenase (NADP(+)) from Chlorobium chlorochromatii (strain CaD3).